Reading from the N-terminus, the 212-residue chain is Ribonuclease HII (212 aa).

In terms of domain architecture, RNase H type-2 spans 1 to 206 (MARFGVDEAG…SRDALGAAEQ (206 aa)). The a divalent metal cation site is built by D7, E8, and D100.

Belongs to the RNase HII family. Requires Mn(2+) as cofactor. Mg(2+) serves as cofactor.

The protein resides in the cytoplasm. It carries out the reaction Endonucleolytic cleavage to 5'-phosphomonoester.. Endonuclease that specifically degrades the RNA of RNA-DNA hybrids. In Halobacterium salinarum (strain ATCC 29341 / DSM 671 / R1), this protein is Ribonuclease HII.